A 33-amino-acid chain; its full sequence is Cytochrome b6-f complex subunit 8 (33 aa).

A helical membrane pass occupies residues 2–22; that stretch reads LFTLAWASLAAVFSFSIAMVV.

It belongs to the PetN family. In terms of assembly, the 4 large subunits of the cytochrome b6-f complex are cytochrome b6, subunit IV (17 kDa polypeptide, PetD), cytochrome f and the Rieske protein, while the 4 small subunits are PetG, PetL, PetM and PetN. The complex functions as a dimer.

It localises to the cellular thylakoid membrane. In terms of biological role, component of the cytochrome b6-f complex, which mediates electron transfer between photosystem II (PSII) and photosystem I (PSI), cyclic electron flow around PSI, and state transitions. The chain is Cytochrome b6-f complex subunit 8 from Prochlorococcus marinus (strain MIT 9303).